A 416-amino-acid polypeptide reads, in one-letter code: Probable protein phosphatase 2C 49 (416 aa).

Residues 91 to 411 (RYGVTSVFGR…DNVSVVVVDL (321 aa)) enclose the PPM-type phosphatase domain. The Mn(2+) site is built by Asp131, Gly132, and Asp319. Pro residues predominate over residues 343-360 (PPSPPGCSRPKAVLPPPA). The segment at 343 to 368 (PPSPPGCSRPKAVLPPPAGASGGGGG) is disordered. Asp402 is a binding site for Mn(2+).

It belongs to the PP2C family. Mg(2+) serves as cofactor. It depends on Mn(2+) as a cofactor.

The enzyme catalyses O-phospho-L-seryl-[protein] + H2O = L-seryl-[protein] + phosphate. It catalyses the reaction O-phospho-L-threonyl-[protein] + H2O = L-threonyl-[protein] + phosphate. This Oryza sativa subsp. japonica (Rice) protein is Probable protein phosphatase 2C 49.